The primary structure comprises 377 residues: All-trans-retinol dehydrogenase [NAD(+)] ADH4 (377 aa).

Residue cysteine 47 participates in Zn(2+) binding. Threonine 49 is a binding site for NAD(+). Residues histidine 68, cysteine 98, cysteine 101, cysteine 104, cysteine 112, and cysteine 179 each coordinate Zn(2+). Residues 204 to 209 (GLGCVG), aspartate 228, lysine 233, 297 to 299 (VGA), 320 to 322 (TFF), and arginine 372 contribute to the NAD(+) site.

It belongs to the zinc-containing alcohol dehydrogenase family. Class-II subfamily. In terms of assembly, dimer. The cofactor is Zn(2+). Liver specific.

It localises to the cytoplasm. The enzyme catalyses all-trans-retinol + NAD(+) = all-trans-retinal + NADH + H(+). The catalysed reaction is 9-cis-retinol + NAD(+) = 9-cis-retinal + NADH + H(+). It catalyses the reaction 20-hydroxy-(5Z,8Z,11Z,14Z)-eicosatetraenoate + NAD(+) = 20-oxo-(5Z,8Z,11Z,14Z)-eicosatetraenoate + NADH + H(+). It carries out the reaction 20-oxo-(5Z,8Z,11Z,14Z)-eicosatetraenoate + NAD(+) + H2O = (5Z,8Z,11Z,14Z)-eicosatetraenedioate + NADH + 2 H(+). The enzyme catalyses 1,4-benzoquinone + NADH + H(+) = hydroquinone + NAD(+). Oxidation of 20-HETE is inhibited by low concentrations of N-heptylformamide. Oxidation of 20-HETE is a decreased by 55-65% by either all-trans-retinol or all-trans-retinoic acid. Strongly inhibited by omega-hydroxy fatty acids. In terms of biological role, catalyzes the NAD-dependent oxidation of either all-trans-retinol or 9-cis-retinol. Also oxidizes long chain omega-hydroxy fatty acids, such as 20-HETE, producing both the intermediate aldehyde, 20-oxoarachidonate and the end product, a dicarboxylic acid, (5Z,8Z,11Z,14Z)-eicosatetraenedioate. Also catalyzes the reduction of benzoquinones. In Mus musculus (Mouse), this protein is All-trans-retinol dehydrogenase [NAD(+)] ADH4.